The following is a 173-amino-acid chain: Bifunctional protein PyrR (173 aa).

The short motif at 93–105 (IILVDDVLYTGRT) is the PRPP-binding element.

This sequence belongs to the purine/pyrimidine phosphoribosyltransferase family. PyrR subfamily. As to quaternary structure, homodimer and homohexamer; in equilibrium.

It catalyses the reaction UMP + diphosphate = 5-phospho-alpha-D-ribose 1-diphosphate + uracil. Functionally, regulates transcriptional attenuation of the pyrimidine nucleotide (pyr) operon by binding in a uridine-dependent manner to specific sites on pyr mRNA. This disrupts an antiterminator hairpin in the RNA and favors formation of a downstream transcription terminator, leading to a reduced expression of downstream genes. Its function is as follows. Also displays a weak uracil phosphoribosyltransferase activity which is not physiologically significant. The protein is Bifunctional protein PyrR of Streptococcus equi subsp. zooepidemicus (strain MGCS10565).